A 140-amino-acid chain; its full sequence is Beta/delta-urticatoxin-De2a (140 aa).

The N-terminal stretch at 1–18 (MKTSTALVLLLALTATSA) is a signal peptide. A propeptide spanning residues 19–78 (SSGDHQFIDEQNIMNVAEGKNVISSLSSSGGGDDAAAIMESVLVNGGNRKMVFMMVSGSQ) is cleaved from the precursor. 6 disulfides stabilise this stretch: Cys81–Cys95, Cys88–Cys100, Cys94–Cys108, Cys113–Cys127, Cys120–Cys131, and Cys126–Cys139.

It belongs to the urticatoxin-2 family. Expressed in trichomes, that are stiff epidermal hairs located on the surface of petioles and leaves.

It localises to the secreted. Functionally, plant defense neurotoxin that causes pain and systemic symptoms in mammals via modulation of voltage-gated sodium channels (Nav). Potent modulator of human Nav1.5/SCN5A (EC(50)=55 nM), Nav1.6/SCN8A (EC(50)=0.86 nM), and Nav1.7/SCN9A (EC(50)=208 nM), where it shifts the activation threshold to more negative potentials and delays fast inactivation. Also shifts the voltage-dependence of steady-state fast inactivation of Nav1.6/SCN8A, but not that of Nav1.5/SCN5A or Nav1.7/SCN9A. On Nav1.7/SCN9A, principally acts by binding to extracellular loops of domain IV (Nav site 3). In vivo, intraplantar injection into mice causes numerous dose-dependent, immediate, and long-lasting spontaneous pain behaviors, while no swelling is observed in the injected paw. At the highest doses tested, systemic symptoms including hypokinesia and hypersalivation are observed. In Dendrocnide excelsa (Giant stinging tree), this protein is Beta/delta-urticatoxin-De2a.